A 714-amino-acid polypeptide reads, in one-letter code: Elongation factor G-like protein (714 aa).

Residues 21-289 enclose the tr-type G domain; the sequence is GGVRNVVLVG…VATRGFPSPM (269 aa). The G1 stretch occupies residues 30-37; it reads GPSGGGKT. 30–37 serves as a coordination point for GTP; the sequence is GPSGGGKT. The segment at 73–77 is G2; the sequence is QRSVG. Residues 94–97 form a G3 region; that stretch reads DTPG. Residues 94 to 98 and 148 to 151 each bind GTP; these read DTPGY and TKLD. Positions 148 to 151 are G4; the sequence is TKLD. Positions 267 to 269 are G5; the sequence is CSS.

This sequence belongs to the TRAFAC class translation factor GTPase superfamily. Classic translation factor GTPase family. EF-G/EF-2 subfamily.

The sequence is that of Elongation factor G-like protein from Mycobacterium tuberculosis (strain CDC 1551 / Oshkosh).